The primary structure comprises 292 residues: Beta-lactamase-like protein 2 homolog (292 aa).

Zn(2+) contacts are provided by histidine 76, histidine 78, aspartate 80, histidine 81, histidine 145, aspartate 163, and histidine 198.

The protein belongs to the metallo-beta-lactamase superfamily. Glyoxalase II family.

This chain is Beta-lactamase-like protein 2 homolog, found in Drosophila melanogaster (Fruit fly).